Here is a 151-residue protein sequence, read N- to C-terminus: 3-hydroxyacyl-[acyl-carrier-protein] dehydratase FabZ (151 aa).

The active site involves H49.

It belongs to the thioester dehydratase family. FabZ subfamily.

The protein localises to the cytoplasm. It catalyses the reaction a (3R)-hydroxyacyl-[ACP] = a (2E)-enoyl-[ACP] + H2O. Involved in unsaturated fatty acids biosynthesis. Catalyzes the dehydration of short chain beta-hydroxyacyl-ACPs and long chain saturated and unsaturated beta-hydroxyacyl-ACPs. The polypeptide is 3-hydroxyacyl-[acyl-carrier-protein] dehydratase FabZ (Bordetella bronchiseptica (strain ATCC BAA-588 / NCTC 13252 / RB50) (Alcaligenes bronchisepticus)).